We begin with the raw amino-acid sequence, 430 residues long: Histidine--tRNA ligase (430 aa).

The protein belongs to the class-II aminoacyl-tRNA synthetase family. As to quaternary structure, homodimer.

The protein resides in the cytoplasm. The catalysed reaction is tRNA(His) + L-histidine + ATP = L-histidyl-tRNA(His) + AMP + diphosphate + H(+). The chain is Histidine--tRNA ligase from Chlamydia caviae (strain ATCC VR-813 / DSM 19441 / 03DC25 / GPIC) (Chlamydophila caviae).